Consider the following 125-residue polypeptide: UPF0102 protein Mpop_0474 (125 aa).

The protein belongs to the UPF0102 family.

The protein is UPF0102 protein Mpop_0474 of Methylorubrum populi (strain ATCC BAA-705 / NCIMB 13946 / BJ001) (Methylobacterium populi).